We begin with the raw amino-acid sequence, 128 residues long: MTDSTFLDEITWTSDGLVPAIARDAKTGTVLMMAWMNRESLSLTAQENIAVYWSRSRGKLWRKGETSGFTQHVKSIRLDCDADVIVLDVEQMGGIACHTGRESCFYRELQNGKWVATDPVLKDPKEIY.

A Mg(2+)-binding site is contributed by aspartate 79. Cysteine 80 is a Zn(2+) binding site. Mg(2+) is bound by residues aspartate 81 and aspartate 83. Cysteine 97 and cysteine 104 together coordinate Zn(2+).

Belongs to the PRA-CH family. In terms of assembly, homodimer. The cofactor is Mg(2+). Zn(2+) is required as a cofactor.

It is found in the cytoplasm. It catalyses the reaction 1-(5-phospho-beta-D-ribosyl)-5'-AMP + H2O = 1-(5-phospho-beta-D-ribosyl)-5-[(5-phospho-beta-D-ribosylamino)methylideneamino]imidazole-4-carboxamide. The protein operates within amino-acid biosynthesis; L-histidine biosynthesis; L-histidine from 5-phospho-alpha-D-ribose 1-diphosphate: step 3/9. In terms of biological role, catalyzes the hydrolysis of the adenine ring of phosphoribosyl-AMP. This is Phosphoribosyl-AMP cyclohydrolase from Saccharophagus degradans (strain 2-40 / ATCC 43961 / DSM 17024).